Reading from the N-terminus, the 438-residue chain is Adenosylhomocysteinase (438 aa).

Thr61, Asp137, and Glu162 together coordinate substrate. 163-165 (TTT) provides a ligand contact to NAD(+). Substrate is bound by residues Lys192 and Asp196. Residues Asn197, 226–231 (GYGDVG), Glu249, Asn284, 305–307 (IGH), and Asn352 each bind NAD(+).

This sequence belongs to the adenosylhomocysteinase family. NAD(+) is required as a cofactor.

It localises to the cytoplasm. The enzyme catalyses S-adenosyl-L-homocysteine + H2O = L-homocysteine + adenosine. The protein operates within amino-acid biosynthesis; L-homocysteine biosynthesis; L-homocysteine from S-adenosyl-L-homocysteine: step 1/1. May play a key role in the regulation of the intracellular concentration of adenosylhomocysteine. This is Adenosylhomocysteinase from Flavobacterium psychrophilum (strain ATCC 49511 / DSM 21280 / CIP 103535 / JIP02/86).